The chain runs to 140 residues: Oleosin Cor a 13 (140 aa).

The next 2 helical transmembrane spans lie at 31–51 (GSLLVPSGLILAGTVIALTLA) and 75–95 (GFLASGGFGVAAVTVLSWIYR).

It belongs to the oleosin family. Expressed in seeds.

It is found in the lipid droplet. The protein resides in the membrane. Functionally, may have a structural role to stabilize the lipid body during desiccation of the seed by preventing coalescence of the oil. Probably interacts with both lipid and phospholipid moieties of lipid bodies. May also provide recognition signals for specific lipase anchorage in lipolysis during seedling growth. The sequence is that of Oleosin Cor a 13 from Corylus avellana (European hazel).